Consider the following 155-residue polypeptide: Ciliary microtubule inner protein 2C (155 aa).

This sequence belongs to the CIMIP2 family.

It is found in the cytoplasm. It localises to the cytoskeleton. The protein resides in the cilium axoneme. Functionally, microtubule inner protein (MIP) part of the dynein-decorated doublet microtubules (DMTs) in cilia axoneme, which is required for motile cilia beating. The polypeptide is Ciliary microtubule inner protein 2C (cimip2ca) (Xenopus laevis (African clawed frog)).